Consider the following 379-residue polypeptide: Homoserine O-acetyltransferase (379 aa).

The AB hydrolase-1 domain occupies 45-355; that stretch reads NAILILHALT…PHGHDAFLIE (311 aa). The active-site Nucleophile is the serine 151. Arginine 220 provides a ligand contact to substrate. Catalysis depends on residues aspartate 316 and histidine 349. Aspartate 350 is a substrate binding site.

Belongs to the AB hydrolase superfamily. MetX family. As to quaternary structure, homodimer.

The protein resides in the cytoplasm. The catalysed reaction is L-homoserine + acetyl-CoA = O-acetyl-L-homoserine + CoA. Its pathway is amino-acid biosynthesis; L-methionine biosynthesis via de novo pathway; O-acetyl-L-homoserine from L-homoserine: step 1/1. In terms of biological role, transfers an acetyl group from acetyl-CoA to L-homoserine, forming acetyl-L-homoserine. The chain is Homoserine O-acetyltransferase from Carboxydothermus hydrogenoformans (strain ATCC BAA-161 / DSM 6008 / Z-2901).